The primary structure comprises 33 residues: Brevinin-2DYa (33 aa).

Cys27 and Cys33 are disulfide-bonded.

As to expression, expressed by the skin glands.

It is found in the secreted. Its function is as follows. Antimicrobial peptide. The polypeptide is Brevinin-2DYa (Rana dybowskii (Dybovsky's frog)).